A 618-amino-acid polypeptide reads, in one-letter code: Nuclear RNA export factor 1 (618 aa).

Residues 1–15 (MADEGKSYNEHDDRV) show a composition bias toward basic and acidic residues. A disordered region spans residues 1–113 (MADEGKSYNE…RGGAGTSQDG (113 aa)). N-acetylalanine is present on A2. The tract at residues 2 to 59 (ADEGKSYNEHDDRVSFPQRRKKGRGPFRWKCGVGNRRSGRGGSGIRSSRFEEDDGDVA) is minor non-specific RNA-binding. An RNA-binding (RBD) region spans residues 2–117 (ADEGKSYNEH…GTSQDGTTKN (116 aa)). Positions 2 to 197 (ADEGKSYNEH…IIINSSAPPY (196 aa)) are interaction with ALYREF/THOC4 and LUZP4. The segment covering 19–28 (QRRKKGRGPF) has biased composition (basic residues). Asymmetric dimethylarginine; alternate is present on R41. The residue at position 41 (R41) is an Omega-N-methylarginine; alternate. Residues 60-117 (MNDPQDGPRVRFNPYTTRPNRRRDTWHDRDRIHVTVRRDRAPQERGGAGTSQDGTTKN) are major non-specific RNA-binding. Positions 60–117 (MNDPQDGPRVRFNPYTTRPNRRRDTWHDRDRIHVTVRRDRAPQERGGAGTSQDGTTKN) are RNA binding. The short motif at 66–99 (GPRVRFNPYTTRPNRRRDTWHDRDRIHVTVRRDR) is the Nuclear localization signal element. Residues 81-102 (RRDTWHDRDRIHVTVRRDRAPQ) are compositionally biased toward basic and acidic residues. The Nuclear export signal signature appears at 82 to 109 (RDTWHDRDRIHVTVRRDRAPQERGGAGT). Residues 118-197 (WFKITIPYGK…IIINSSAPPY (80 aa)) enclose the RRM domain. Y125 is modified (3'-nitrotyrosine). LRR repeat units follow at residues 265–290 (ELLS…QKAP), 291–314 (NLKI…IKGL), 315–342 (KLEE…TIRE), and 343–370 (RFPK…TMLP). Residues 385–535 (LVLHFLQQYY…LCIVNDELFV (151 aa)) form the NTF2 domain. The TAP-C domain maps to 564 to 618 (QEQQDMLQAFSTQSGMNLEWSQKCLQDNNWDYTRSAQAFTHLKAKGEIPEVAFMK).

It belongs to the NXF family. Heterodimer (via NTF2 domain) with NXT1. The formation of NXF1-NXT1 heterodimers is required for the NXF1-mediated nuclear mRNA export. Forms a complex with RANBP2/NUP358, NXT1 and RANGAP1. Associates with the exon junction complex (EJC). Associates with the transcription/export (TREX) complex. Found in a mRNA complex with UPF3A and UPF3B. Found in a post-splicing complex with RBM8A, UPF1, UPF2, UPF3A, UPF3B and RNPS1. Interacts (via N-terminus) with DHX9 (via N-terminus); this interaction is direct and negatively regulates NXF1-mediated nuclear export of constitutive transport element (CTE)-containing cellular mRNAs. Interacts with FYTTD1/UIF. Interacts with EIF4A3. Interacts with NUP42. Interacts with ALYREF/THOC4. Interacts with CHTOP. Interacts with FRG1 (via N-terminus). Interacts with LUZP4. Interacts with FMR1; the interaction occurs in a mRNA-dependent and polyribosomes-independent manner in the nucleus. Interacts with CPSF6 (via N-terminus); this interaction is direct. Interacts with RBM15. Interacts with RBM15B. Interacts with MCM3AP; this interaction is not mediated by RNA. Interacts with DDX3X (via C-terminus); this interaction may be partly involved in DDX3X nuclear export and in NXF1 localization to stress granules. Interacts with PABPC1/PABP1.

It localises to the nucleus. It is found in the nucleoplasm. Its subcellular location is the nucleus speckle. The protein resides in the nuclear pore complex. The protein localises to the nucleus envelope. It localises to the cytoplasm. It is found in the stress granule. Its function is as follows. Involved in the nuclear export of mRNA species bearing retroviral constitutive transport elements (CTE) and in the export of mRNA from the nucleus to the cytoplasm (TAP/NFX1 pathway). The NXF1-NXT1 heterodimer is involved in the export of HSP70 mRNA in conjunction with ALYREF/THOC4 and THOC5 components of the TREX complex. ALYREF/THOC4-bound mRNA is thought to be transferred to the NXF1-NXT1 heterodimer for export. Also involved in nuclear export of m6A-containing mRNAs: interaction between SRSF3 and YTHDC1 facilitates m6A-containing mRNA-binding to both SRSF3 and NXF1, promoting mRNA nuclear export. This chain is Nuclear RNA export factor 1 (Nxf1), found in Rattus norvegicus (Rat).